A 484-amino-acid chain; its full sequence is Secreted RxLR effector protein 104 (484 aa).

The signal sequence occupies residues 1-24; the sequence is MRSAYPVLTALLVVASSQIAAGSG. The RxLR-dEER motif lies at 48-65; that stretch reads RFLRGSRDVHNNVANEER. N-linked (GlcNAc...) asparagine glycosylation occurs at asparagine 175. A disordered region spans residues 324-463; it reads ENPKGQSPYP…SSSVLTPEDV (140 aa). A compositionally biased stretch (polar residues) spans 327-346; it reads KGQSPYPSTPLTAASTSKGG. Over residues 402 to 413 the composition is skewed to low complexity; the sequence is SSSSGPSRAFAP. Over residues 418–428 the composition is skewed to polar residues; sequence DQTFITENSRL.

The protein belongs to the RxLR effector family.

Its subcellular location is the secreted. It localises to the host nucleus. In terms of biological role, secreted effector that completely suppresses the host cell death induced by cell death-inducing proteins. In Plasmopara viticola (Downy mildew of grapevine), this protein is Secreted RxLR effector protein 104.